Here is a 178-residue protein sequence, read N- to C-terminus: MNKEIIAKRYALALFQIATEKQLLDQLEEEIRAVWQVFAENDKFLSLLTYPKLSLEKKKALIKETFAAVSSPLRNTLLLLLERHRIDIVPQLAEQFIHLVNEARGVAEATAYSARPLTEEEKRALSDVFAKKMGKTTLHIENIVDPSLIGGVKLRIGNRIYDGSISGKLERIQRQLIG.

The protein belongs to the ATPase delta chain family. F-type ATPases have 2 components, F(1) - the catalytic core - and F(0) - the membrane proton channel. F(1) has five subunits: alpha(3), beta(3), gamma(1), delta(1), epsilon(1). F(0) has three main subunits: a(1), b(2) and c(10-14). The alpha and beta chains form an alternating ring which encloses part of the gamma chain. F(1) is attached to F(0) by a central stalk formed by the gamma and epsilon chains, while a peripheral stalk is formed by the delta and b chains.

It localises to the cell membrane. F(1)F(0) ATP synthase produces ATP from ADP in the presence of a proton or sodium gradient. F-type ATPases consist of two structural domains, F(1) containing the extramembraneous catalytic core and F(0) containing the membrane proton channel, linked together by a central stalk and a peripheral stalk. During catalysis, ATP synthesis in the catalytic domain of F(1) is coupled via a rotary mechanism of the central stalk subunits to proton translocation. Its function is as follows. This protein is part of the stalk that links CF(0) to CF(1). It either transmits conformational changes from CF(0) to CF(1) or is implicated in proton conduction. This chain is ATP synthase subunit delta, found in Geobacillus sp. (strain WCH70).